A 354-amino-acid chain; its full sequence is Peptide chain release factor 1 (354 aa).

Gln232 is subject to N5-methylglutamine.

The protein belongs to the prokaryotic/mitochondrial release factor family. Methylated by PrmC. Methylation increases the termination efficiency of RF1.

It is found in the cytoplasm. Peptide chain release factor 1 directs the termination of translation in response to the peptide chain termination codons UAG and UAA. The protein is Peptide chain release factor 1 of Phytoplasma australiense.